The chain runs to 119 residues: gSG7 salivary protein (119 aa).

Intrachain disulfides connect C58–C113 and C81–C91.

The protein localises to the secreted. Its activity is regulated as follows. The activity is increased in the presence of host properdin (CFP). Salivary protein that inhibits the alternative pathway of complement system activation in the host while having no inhibitory effect on the classical pathway. Inhibits activity of activated host C3-convertase complex C3bBb (C3-CFB). Enhances accumulation of C3bBb on immobilized properdin. In Anopheles freeborni (Western malaria mosquito), this protein is gSG7 salivary protein.